The following is a 470-amino-acid chain: 3-isopropylmalate dehydratase large subunit (470 aa).

Positions 349, 409, and 412 each coordinate [4Fe-4S] cluster.

It belongs to the aconitase/IPM isomerase family. LeuC type 1 subfamily. Heterodimer of LeuC and LeuD. [4Fe-4S] cluster serves as cofactor.

The catalysed reaction is (2R,3S)-3-isopropylmalate = (2S)-2-isopropylmalate. It functions in the pathway amino-acid biosynthesis; L-leucine biosynthesis; L-leucine from 3-methyl-2-oxobutanoate: step 2/4. In terms of biological role, catalyzes the isomerization between 2-isopropylmalate and 3-isopropylmalate, via the formation of 2-isopropylmaleate. The protein is 3-isopropylmalate dehydratase large subunit of Methylobacterium radiotolerans (strain ATCC 27329 / DSM 1819 / JCM 2831 / NBRC 15690 / NCIMB 10815 / 0-1).